The primary structure comprises 757 residues: Relaxin receptor 1 (757 aa).

Residues 1–408 lie on the Extracellular side of the membrane; it reads MTSGSVFFYI…LENLLASIIQ (408 aa). One can recognise an LDL-receptor class A domain in the interval 26–63; that stretch reads KCSLGYFPCGNITKCLPQLLHCNGVDDCGNQADEDNCG. Intrachain disulfides connect cysteine 27-cysteine 40, cysteine 34-cysteine 53, and cysteine 47-cysteine 62. N-linked (GlcNAc...) asparagine glycosylation occurs at asparagine 36. Residues leucine 45, asparagine 48, valine 50, aspartate 52, aspartate 58, and glutamate 59 each coordinate Ca(2+). The LRRNT domain maps to 91 to 127; that stretch reads ETPECLVGSVPVQCLCRGLELDCDETNLRAVPSVSSN. Residue asparagine 127 is glycosylated (N-linked (GlcNAc...) asparagine). LRR repeat units lie at residues 151 to 172, 175 to 196, 199 to 220, 223 to 244, 248 to 269, 272 to 293, 296 to 317, 320 to 341, and 344 to 365; these read DLQK…AFRG, SLTK…VFED, RLEW…TFYG, SLIL…PLCQ, RLHW…TLIS, NLTV…TFAP, KLDE…IFKD, ELSQ…QFDY, and KLKS…MFRP. N-linked (GlcNAc...) asparagine glycans are attached at residues asparagine 264 and asparagine 272. Asparagine 325 carries N-linked (GlcNAc...) asparagine glycosylation. N-linked (GlcNAc...) asparagine glycosylation is present at asparagine 368. The helical transmembrane segment at 409–429 threads the bilayer; it reads RVFVWVVSAVTCFGNVFVICM. The Cytoplasmic portion of the chain corresponds to 430–443; that stretch reads RPYIRSENKLYAMS. The chain crosses the membrane as a helical span at residues 444–464; sequence IISLCCADCLMGIYLFVIGGF. The Extracellular segment spans residues 465–486; the sequence is DLKFRGEYNKHAQLWMESTHCQ. A disulfide bridge connects residues cysteine 485 and cysteine 563. Residues 487-507 traverse the membrane as a helical segment; the sequence is LVGSLAILSTEVSVLLLTFLT. Over 508-527 the chain is Cytoplasmic; that stretch reads LEKYICIVYPFRCVRPGKCR. A helical membrane pass occupies residues 528-548; that stretch reads TITVLILIWITGFIVAFIPLS. The Extracellular portion of the chain corresponds to 549–577; sequence NKEFFKNYYGTNGVCFPLHSEDTESIGAQ. The chain crosses the membrane as a helical span at residues 578–598; sequence VYSVAIFLGINLAAFIIIVFS. The Cytoplasmic segment spans residues 599–629; the sequence is YGSMFYSVHQSAITATEIRNQVKKEMILAKR. A helical membrane pass occupies residues 630–650; the sequence is FFFIVFTDALCWIPIFVVKFL. Over 651–660 the chain is Extracellular; it reads SLLQVEIPGT. Residues 661-681 form a helical membrane-spanning segment; that stretch reads ITSWVVIFILPINSALNPILY. Over 682-757 the chain is Cytoplasmic; sequence TLTTRPFKEM…SQSTRLNSYS (76 aa).

Belongs to the G-protein coupled receptor 1 family. Interacts with C1QTNF8.

It localises to the cell membrane. Functionally, receptor for relaxins. The activity of this receptor is mediated by G proteins leading to stimulation of adenylate cyclase and an increase of cAMP. Binding of the ligand may also activate a tyrosine kinase pathway that inhibits the activity of a phosphodiesterase that degrades cAMP. The polypeptide is Relaxin receptor 1 (RXFP1) (Pongo abelii (Sumatran orangutan)).